An 85-amino-acid chain; its full sequence is Probable [Fe-S]-dependent transcriptional repressor (85 aa).

Iron-sulfur cluster is bound by residues Cys-56, Cys-61, Cys-64, and Cys-71.

Belongs to the FeoC family.

Functionally, may function as a transcriptional regulator that controls feoABC expression. The protein is Probable [Fe-S]-dependent transcriptional repressor of Yersinia pseudotuberculosis serotype O:1b (strain IP 31758).